The chain runs to 137 residues: NADH dehydrogenase [ubiquinone] 1 beta subcomplex subunit 7 (137 aa).

The N-myristoyl glycine moiety is linked to residue G2. Residues 56 to 98 (RDYCAHHLIRLLKCKRDSFPNFLACKQERHDWDYCEHRDYVMR) enclose the CHCH domain. A Cx9C motif 1 motif is present at residues 59 to 69 (CAHHLIRLLKC). 2 disulfide bridges follow: C59-C90 and C69-C80. Phosphoserine is present on S73. Residues 80-90 (CKQERHDWDYC) carry the Cx9C motif 2 motif. Residues 113 to 137 (KRREKKAAELAKGQGPGEVDPKVAL) form a disordered region.

This sequence belongs to the complex I NDUFB7 subunit family. Complex I is composed of 45 different subunits.

The protein localises to the mitochondrion inner membrane. It localises to the mitochondrion intermembrane space. Functionally, accessory subunit of the mitochondrial membrane respiratory chain NADH dehydrogenase (Complex I), that is believed not to be involved in catalysis. Complex I functions in the transfer of electrons from NADH to the respiratory chain. The immediate electron acceptor for the enzyme is believed to be ubiquinone. This is NADH dehydrogenase [ubiquinone] 1 beta subcomplex subunit 7 (NDUFB7) from Homo sapiens (Human).